Reading from the N-terminus, the 175-residue chain is Phytochrome-interacting ankyrin-repeat protein 1 (175 aa).

ANK repeat units follow at residues 30–59, 67–96, and 102–131; these read RGWTQLHIKAREGDLKAVKELLDQGADVNA, KGMTPLHLAAKGGHIEVMDLLLERGANMEA, and CGWTPLHAAAKERKREAVKFLVGNGAFLPD.

In terms of assembly, interacts with phytochrome A (PHYA), both in Pr and Pfr forms.

The protein localises to the cytoplasm. It localises to the nucleus. The protein resides in the mitochondrion. This chain is Phytochrome-interacting ankyrin-repeat protein 1, found in Arabidopsis thaliana (Mouse-ear cress).